Consider the following 704-residue polypeptide: Translin-associated factor X-interacting protein 1 (704 aa).

The segment at 1–37 is disordered; sequence MANLQERKSFSKPRISIQASGGTPEAKGIEKRKLSQK. Coiled coils occupy residues 190 to 230 and 304 to 342; these read EISV…AEEY and RRDL…LQLH.

Interacts with TSNAX. As to expression, specifically expressed in testes. Predominantly detected in the post-meiotic stages of germ cells.

It localises to the cytoplasm. The protein localises to the perinuclear region. Possible role in spermatogenesis. This Mus musculus (Mouse) protein is Translin-associated factor X-interacting protein 1.